A 341-amino-acid polypeptide reads, in one-letter code: L-threonine 3-dehydrogenase (341 aa).

Zn(2+) is bound at residue cysteine 38. Catalysis depends on charge relay system residues threonine 40 and histidine 43. 6 residues coordinate Zn(2+): histidine 63, glutamate 64, cysteine 93, cysteine 96, cysteine 99, and cysteine 107. NAD(+) is bound by residues isoleucine 175, aspartate 195, arginine 200, 262–264 (LGI), and 286–287 (IY).

It belongs to the zinc-containing alcohol dehydrogenase family. In terms of assembly, homotetramer. Requires Zn(2+) as cofactor.

It is found in the cytoplasm. It carries out the reaction L-threonine + NAD(+) = (2S)-2-amino-3-oxobutanoate + NADH + H(+). The protein operates within amino-acid degradation; L-threonine degradation via oxydo-reductase pathway; glycine from L-threonine: step 1/2. Functionally, catalyzes the NAD(+)-dependent oxidation of L-threonine to 2-amino-3-ketobutyrate. This Colwellia psychrerythraea (strain 34H / ATCC BAA-681) (Vibrio psychroerythus) protein is L-threonine 3-dehydrogenase.